The primary structure comprises 185 residues: Methanol dehydrogenase activator (185 aa).

This sequence belongs to the Nudix hydrolase family. Homodimer. Requires Mg(2+) as cofactor.

Its function is as follows. Involved in the activation of the NAD-dependent methanol dehydrogenase (MDH). MDH activation by Act involves hydrolytic removal of the nicotinamide mononucleotide (NMN) moiety of the NAD cofactor, changing its ping-pong type of reaction mechanism into a ternary complex reaction mechanism. It requires the presence of magnesium ions and is also able to use ADP-ribose. The protein is Methanol dehydrogenase activator of Bacillus methanolicus.